The chain runs to 465 residues: Cysteine--tRNA ligase (465 aa).

Cys27 provides a ligand contact to Zn(2+). The 'HIGH' region motif lies at Pro29–His39. Cys207, His237, and Glu241 together coordinate Zn(2+). The 'KMSKS' region signature appears at Lys269 to Ser273. ATP is bound at residue Lys272.

Belongs to the class-I aminoacyl-tRNA synthetase family. In terms of assembly, monomer. Zn(2+) is required as a cofactor.

The protein localises to the cytoplasm. It carries out the reaction tRNA(Cys) + L-cysteine + ATP = L-cysteinyl-tRNA(Cys) + AMP + diphosphate. The protein is Cysteine--tRNA ligase of Helicobacter pylori (strain P12).